Here is a 432-residue protein sequence, read N- to C-terminus: Glutamate-1-semialdehyde 2,1-aminomutase (432 aa).

Lysine 265 is modified (N6-(pyridoxal phosphate)lysine).

The protein belongs to the class-III pyridoxal-phosphate-dependent aminotransferase family. HemL subfamily. Homodimer. It depends on pyridoxal 5'-phosphate as a cofactor.

Its subcellular location is the cytoplasm. The catalysed reaction is (S)-4-amino-5-oxopentanoate = 5-aminolevulinate. It functions in the pathway porphyrin-containing compound metabolism; protoporphyrin-IX biosynthesis; 5-aminolevulinate from L-glutamyl-tRNA(Glu): step 2/2. In Photobacterium profundum (strain SS9), this protein is Glutamate-1-semialdehyde 2,1-aminomutase.